A 217-amino-acid chain; its full sequence is Small ribosomal subunit protein uS3 (217 aa).

In terms of domain architecture, KH type-2 spans 38 to 106 (IRKFLKKRLS…KVTLDIQEVR (69 aa)).

This sequence belongs to the universal ribosomal protein uS3 family. Part of the 30S ribosomal subunit. Forms a tight complex with proteins S10 and S14.

Functionally, binds the lower part of the 30S subunit head. Binds mRNA in the 70S ribosome, positioning it for translation. This is Small ribosomal subunit protein uS3 from Desulfotalea psychrophila (strain LSv54 / DSM 12343).